The primary structure comprises 165 residues: uncharacterized protein (165 aa).

This sequence belongs to the SixA phosphatase family.

This is an uncharacterized protein from Picosynechococcus sp. (strain ATCC 27264 / PCC 7002 / PR-6) (Agmenellum quadruplicatum).